A 205-amino-acid chain; its full sequence is Large ribosomal subunit protein bL25 (205 aa).

The disordered stretch occupies residues phenylalanine 178–glutamate 205. Residues glutamate 182–glutamate 197 are compositionally biased toward acidic residues.

Belongs to the bacterial ribosomal protein bL25 family. CTC subfamily. As to quaternary structure, part of the 50S ribosomal subunit; part of the 5S rRNA/L5/L18/L25 subcomplex. Contacts the 5S rRNA. Binds to the 5S rRNA independently of L5 and L18.

Its function is as follows. This is one of the proteins that binds to the 5S RNA in the ribosome where it forms part of the central protuberance. The polypeptide is Large ribosomal subunit protein bL25 (Cutibacterium acnes (strain DSM 16379 / KPA171202) (Propionibacterium acnes)).